The chain runs to 127 residues: Putative membrane protein insertion efficiency factor (127 aa).

The disordered stretch occupies residues aspartate 71–glutamate 106. Over residues arginine 88–threonine 98 the composition is skewed to basic and acidic residues.

It belongs to the UPF0161 family.

It is found in the cell inner membrane. Functionally, could be involved in insertion of integral membrane proteins into the membrane. The chain is Putative membrane protein insertion efficiency factor from Sorangium cellulosum (strain So ce56) (Polyangium cellulosum (strain So ce56)).